The following is a 301-amino-acid chain: Ribonuclease Z (301 aa).

His61, His63, Asp65, His66, His140, Asp211, and His269 together coordinate Zn(2+). The active-site Proton acceptor is Asp65.

Belongs to the RNase Z family. In terms of assembly, homodimer. Requires Zn(2+) as cofactor.

It catalyses the reaction Endonucleolytic cleavage of RNA, removing extra 3' nucleotides from tRNA precursor, generating 3' termini of tRNAs. A 3'-hydroxy group is left at the tRNA terminus and a 5'-phosphoryl group is left at the trailer molecule.. In terms of biological role, zinc phosphodiesterase, which displays some tRNA 3'-processing endonuclease activity. Probably involved in tRNA maturation, by removing a 3'-trailer from precursor tRNA. This Bradyrhizobium diazoefficiens (strain JCM 10833 / BCRC 13528 / IAM 13628 / NBRC 14792 / USDA 110) protein is Ribonuclease Z.